The following is a 517-amino-acid chain: Phenol 2-monooxygenase, oxygenase component DmpN (517 aa).

The Fe cation site is built by Glu-109, Glu-139, His-142, Glu-200, Glu-234, and His-237.

It belongs to the TmoA/XamoA family. The multicomponent enzyme phenol hydroxylase is formed by DmpL (P1 component), DmpM (P2 component), DmpN (P3 component), DmpO (P4 component) and DmpP (P5 component). The oxygenase component is a dimer composed of three subunits, DmpL, DmpN and DmpO (DmpLNO). DmpN interacts with the auxiliary protein DmpK (P0 component). Requires Fe(2+) as cofactor.

It carries out the reaction phenol + NADH + O2 + H(+) = catechol + NAD(+) + H2O. It functions in the pathway aromatic compound metabolism; phenol degradation. With respect to regulation, requires DmpM for efficient turnover. The activity of DmpLNO oxygenase is inhibited by dithiothreitol (DTT) by a mechanism apparently involving H(2)O(2) generation. Functionally, part of a multicomponent enzyme which catalyzes the degradation of phenol and some of its methylated derivatives. DmpL, DmpN and DmpO form the oxygenase component of the complex. Required for growth on phenol and for in vitro phenol hydroxylase activity. In Pseudomonas sp. (strain CF600), this protein is Phenol 2-monooxygenase, oxygenase component DmpN.